The following is a 445-amino-acid chain: ATP synthase subunit b-delta (445 aa).

Residues 1-168 form an ATP synthase subunit b region; it reads MSTFIGQLVG…PAAAEVERPV (168 aa). The chain crosses the membrane as a helical span at residues 4-24; it reads FIGQLVGFAAIVFLVWRYVVP. The interval 169-445 is ATP synthase subunit delta; sequence AAKMRSASRR…LTAAEAQLPD (277 aa).

In the N-terminal section; belongs to the ATPase B chain family. It in the C-terminal section; belongs to the ATPase delta chain family. As to quaternary structure, F-type ATPases have 2 components, F(1) - the catalytic core - and F(0) - the membrane proton channel. F(1) has five subunits: alpha(3), beta(3), gamma(1), delta(1), epsilon(1). F(0) has three main subunits: a(1), b(2) and c(10-14). The alpha and beta chains form an alternating ring which encloses part of the gamma chain. F(1) is attached to F(0) by a central stalk formed by the gamma and epsilon chains, while a peripheral stalk is formed by the delta and b chains.

The protein localises to the cell membrane. Its function is as follows. F(1)F(0) ATP synthase produces ATP from ADP in the presence of a proton or sodium gradient. F-type ATPases consist of two structural domains, F(1) containing the extramembraneous catalytic core and F(0) containing the membrane proton channel, linked together by a central stalk and a peripheral stalk. During catalysis, ATP synthesis in the catalytic domain of F(1) is coupled via a rotary mechanism of the central stalk subunits to proton translocation. In terms of biological role, this fusion protein includes a component of the F(0) channel (subunit b) and of the F(1) subunit (subunit delta). Two copies of subunit b and one of delta together form the peripheral 'stator' stalk which links F(1) to F(0). This Mycobacterium ulcerans (strain Agy99) protein is ATP synthase subunit b-delta (atpFH).